Reading from the N-terminus, the 935-residue chain is Isoleucine--tRNA ligase (935 aa).

The short motif at 58–68 is the 'HIGH' region element; sequence PYANGSIHVGH. Glu558 provides a ligand contact to L-isoleucyl-5'-AMP. Residues 599 to 603 carry the 'KMSKS' region motif; sequence KMSKS. Residue Lys602 participates in ATP binding. Cys897, Cys900, Cys917, and Cys920 together coordinate Zn(2+).

The protein belongs to the class-I aminoacyl-tRNA synthetase family. IleS type 1 subfamily. In terms of assembly, monomer. The cofactor is Zn(2+).

The protein resides in the cytoplasm. The enzyme catalyses tRNA(Ile) + L-isoleucine + ATP = L-isoleucyl-tRNA(Ile) + AMP + diphosphate. Its function is as follows. Catalyzes the attachment of isoleucine to tRNA(Ile). As IleRS can inadvertently accommodate and process structurally similar amino acids such as valine, to avoid such errors it has two additional distinct tRNA(Ile)-dependent editing activities. One activity is designated as 'pretransfer' editing and involves the hydrolysis of activated Val-AMP. The other activity is designated 'posttransfer' editing and involves deacylation of mischarged Val-tRNA(Ile). This chain is Isoleucine--tRNA ligase, found in Francisella tularensis subsp. holarctica (strain OSU18).